A 1217-amino-acid chain; its full sequence is DNA-directed RNA polymerase subunit beta' (1217 aa).

Zn(2+) is bound by residues Cys-60, Cys-62, Cys-75, and Cys-78. Mg(2+) contacts are provided by Asp-449, Asp-451, and Asp-453. Zn(2+) is bound by residues Cys-821, Cys-895, Cys-902, and Cys-905.

It belongs to the RNA polymerase beta' chain family. As to quaternary structure, the RNAP catalytic core consists of 2 alpha, 1 beta, 1 beta' and 1 omega subunit. When a sigma factor is associated with the core the holoenzyme is formed, which can initiate transcription. The cofactor is Mg(2+). Requires Zn(2+) as cofactor.

The catalysed reaction is RNA(n) + a ribonucleoside 5'-triphosphate = RNA(n+1) + diphosphate. Its function is as follows. DNA-dependent RNA polymerase catalyzes the transcription of DNA into RNA using the four ribonucleoside triphosphates as substrates. This is DNA-directed RNA polymerase subunit beta' from Lactobacillus helveticus (strain DPC 4571).